A 120-amino-acid polypeptide reads, in one-letter code: Large ribosomal subunit protein uL18 (120 aa).

It belongs to the universal ribosomal protein uL18 family. In terms of assembly, part of the 50S ribosomal subunit; part of the 5S rRNA/L5/L18/L25 subcomplex. Contacts the 5S and 23S rRNAs.

This is one of the proteins that bind and probably mediate the attachment of the 5S RNA into the large ribosomal subunit, where it forms part of the central protuberance. This chain is Large ribosomal subunit protein uL18, found in Herminiimonas arsenicoxydans.